A 593-amino-acid chain; its full sequence is Regulatory protein NPR1 (593 aa).

Phosphoserine is present on residues Ser11, Ser15, Ser55, and Ser59. One can recognise a BTB domain in the interval Ser65–Pro144. Residues Val147–Arg161 form a C2HC NPR-type zinc finger. Zn(2+) is bound by residues Cys150 and Cys155. Cys156 carries the post-translational modification S-nitrosocysteine. 2 residues coordinate Zn(2+): His157 and Cys160. ANK repeat units follow at residues Lys229 to Leu258, Lys265 to Asp295, Cys297 to His324, Arg328 to Glu357, and Glu361 to Ile397. The SIM3, required fo binding to SUMO3 and subsequent sumoylation signature appears at Ile345–Leu348. Residues His387–Thr525 are salicylic acid-binding core (SBC). Arg432 serves as a coordination point for salicylate. The short motif at Lys537–Lys554 is the Nuclear localization signal element. Residues Leu563–Arg593 form a disordered region. Residues Ser566 to Thr579 are compositionally biased toward low complexity. Positions Arg583–Arg593 are enriched in basic residues.

Belongs to the plant 'ANKYRIN-BTB/POZ' family. 'NPR1-like' subfamily. In terms of assembly, homodimer. Oligomer of dimers in an uninduced quiescent state; disulfide-linked. Forms activated (i.e. sumoylated) homodimers and monomers upon systemic acquired resistance (SAR) induction. Interacts with TGA1, TGA3, TGA4, TGA5, TGA6, TGA7 and with reduced forms of TGA1 and TGA4. Activated homodimer binds two TGA3 dimers in the presence of DNA via its ANK 2 repeat (265-295), thus forming a TGA3(2)-NPR1(2)-TGA3(2) complex in which NPR1 serves as a transcription cofactor by bridging two transcription factor complexes in an enhanceosome. Interacts with NIMIN-1 and NIMIN-3 via its C-terminal region, and with NIMIN-2 via its N-terminal region. Interacts with SUMO3 but not with SUMO1 and SUMO2; this interaction is required for phosphorylation at Ser-11 and Ser-15, and triggers activation by sumoylation and subsequent degradation. Binds to NPR3 and NPR4; these interactions are promoted by association of salicylic acid (SA) with NPR3, but disrupted by SA association with NPR4, probably due to conformational changes. Binds to CUL3A, a core component of the cullin-RING ubiquitin ligases (CRL); this interaction requires NPR3 and NPR4. Interacts with NPR2 independently of SA. Binds to WRKY70 when unmodified (i.e. not sumoylated). In terms of processing, phosphorylation at Ser-55 and Ser-59 prevents sumoylation to ensure stability and quiescence. Post-translationally, phosphorylated at Ser-11 and Ser-15 in the nucleus; facilitates its recruitment to a cullin3-based ubiquitin ligase leading to polyubiquitination and subsequent CUL3/CSN-mediated degradation. This phosphorylation at Ser-11 and Ser-15 requires interaction with SUMO3, and promotes in turn activation by sumoylation and subsequent degradation. Ubiquitinated. In terms of processing, sumoylated by SUMO3 independently of an E3 ligase to activate defense gene expression by switching from association with WRKY transcriptional repressors (e.g. WRKY70) to TGA transcriptional activators (e.g. TGA3). Sumoylation is inhibited by phosphorylation at Ser-55 and Ser-59, but seems to promote phosphorylation at Ser-11 and Ser-15. Sumoylation also triggers degradation, making immune induction transient. Post-translationally, the Cys-82-SH group reacts with Cys-216-SH of the other subunit to form an intermolecular disulfide. This disulfide might subsequently be reduced upon systemic acquired resistance (SAR) induction. S-nitrosylation at Cys-156 facilitates its oligomerization.

The protein localises to the cytoplasm. Its subcellular location is the nucleus. It is found in the nuclear body. The protein operates within protein modification; protein ubiquitination. Salicylic acid (SA)-binding substrate-specific adapter of an E3 ubiquitin-protein ligase complex (CUL3-RBX1-BTB) which mediates the ubiquitination and subsequent proteasomal degradation of target proteins. Transcription cofactor that represses gene expression in the absence of salicylic acid (SA), when attached to negative cis-elements (W-box) with WRKY transcription factors (e.g. WRKY70), but stimulates gene expression upon activation by SA, when sumoylated and attached to positive cis-elements (as-1) with TGA transcription factors (e.g. TGA3), thus confering immunity through a series of gene regulations ending in a significant increase in antimicrobial and defense genes expression (e.g. PR-1 and PR-2). Binds to SA with low capacity; this leads to conformational changes. Key positive regulator of the SA-dependent signaling pathway that negatively regulates jasmonic acid (JA)-dependent signaling pathway. Controls the onset of systemic acquired resistance (SAR). Upon SAR induction, a biphasic change in cellular reduction potential occurs, resulting in reduction of the cytoplasmic oligomeric form to dimeric and monomeric forms, which accumulate in the nucleus and activate gene expression. Appears to control lesion expansion by acting as an inhibitor of programmed cell death (PCD) during effector-triggered immunity (ETI) that occurs in response to incompatible interaction with avirulent pathogenic bacteria (i.e. Pseudomonas syringae ES4326/avrRpt2) ending in a hypersensitive response (HR). Phosphorylated form is target of proteasome degradation. The sequence is that of Regulatory protein NPR1 from Arabidopsis thaliana (Mouse-ear cress).